The following is a 283-amino-acid chain: Pantothenate synthetase (283 aa).

Position 30–37 (M30–H37) interacts with ATP. Catalysis depends on H37, which acts as the Proton donor. A (R)-pantoate-binding site is contributed by Q61. Q61 lines the beta-alanine pocket. G147–D150 lines the ATP pocket. A (R)-pantoate-binding site is contributed by Q153. Residues V176 and M184–R187 contribute to the ATP site.

This sequence belongs to the pantothenate synthetase family. In terms of assembly, homodimer.

Its subcellular location is the cytoplasm. It carries out the reaction (R)-pantoate + beta-alanine + ATP = (R)-pantothenate + AMP + diphosphate + H(+). It participates in cofactor biosynthesis; (R)-pantothenate biosynthesis; (R)-pantothenate from (R)-pantoate and beta-alanine: step 1/1. Catalyzes the condensation of pantoate with beta-alanine in an ATP-dependent reaction via a pantoyl-adenylate intermediate. This Syntrophobacter fumaroxidans (strain DSM 10017 / MPOB) protein is Pantothenate synthetase.